A 480-amino-acid polypeptide reads, in one-letter code: PTS system sucrose-specific EIIBC component (480 aa).

The region spanning 4–87 (KKSAENILQA…EKITGKEASS (84 aa)) is the PTS EIIB type-1 domain. The Phosphocysteine intermediate; for EIIB activity role is filled by C26. 8 helical membrane-spanning segments follow: residues 109-129 (LSDIFVPIIPAIVAGGLLMGI), 158-178 (MINIFANAPFTLLPILIGFSA), 182-202 (FGGNAYLGAALGMILVHPELM), 264-284 (LLTPLLAILSTGFITFSFVGP), 303-323 (FGGAIGGLIFGLLYAPIVITG), 349-369 (PIATMSNIAQGAAALAAFFII), 405-425 (PFIGAIVGSGIGSAYIAFFKV), and 449-469 (LHYGIAMIIAFIVAFGVTYAL). A PTS EIIC type-1 domain is found at 120 to 480 (IVAGGLLMGI…YRKKYRNIEA (361 aa)).

The protein localises to the cell membrane. It carries out the reaction N(pros)-phospho-L-histidyl-[protein](out) + sucrose = sucrose 6(G)-phosphate(in) + L-histidyl-[protein]. In terms of biological role, the phosphoenolpyruvate-dependent sugar phosphotransferase system (sugar PTS), a major carbohydrate active transport system, catalyzes the phosphorylation of incoming sugar substrates concomitantly with their translocation across the cell membrane. This system is involved in sucrose transport. The sequence is that of PTS system sucrose-specific EIIBC component from Staphylococcus xylosus.